Reading from the N-terminus, the 196-residue chain is ATP-dependent Clp protease proteolytic subunit (196 aa).

Serine 98 (nucleophile) is an active-site residue. Histidine 123 is an active-site residue.

This sequence belongs to the peptidase S14 family. Fourteen ClpP subunits assemble into 2 heptameric rings which stack back to back to give a disk-like structure with a central cavity, resembling the structure of eukaryotic proteasomes.

Its subcellular location is the cytoplasm. The enzyme catalyses Hydrolysis of proteins to small peptides in the presence of ATP and magnesium. alpha-casein is the usual test substrate. In the absence of ATP, only oligopeptides shorter than five residues are hydrolyzed (such as succinyl-Leu-Tyr-|-NHMec, and Leu-Tyr-Leu-|-Tyr-Trp, in which cleavage of the -Tyr-|-Leu- and -Tyr-|-Trp bonds also occurs).. Its function is as follows. Cleaves peptides in various proteins in a process that requires ATP hydrolysis. Has a chymotrypsin-like activity. Plays a major role in the degradation of misfolded proteins. In Acidobacterium capsulatum (strain ATCC 51196 / DSM 11244 / BCRC 80197 / JCM 7670 / NBRC 15755 / NCIMB 13165 / 161), this protein is ATP-dependent Clp protease proteolytic subunit.